Consider the following 520-residue polypeptide: Endosomal/lysosomal proton channel TMEM175 (520 aa).

Positions 1–27 (MGENDESEIIEHHDDEEMEKRRPPRTH) are disordered. The Cytoplasmic portion of the chain corresponds to 1-49 (MGENDESEIIEHHDDEEMEKRRPPRTHAQSFLESVASSVKEGHSSTQSS). Basic and acidic residues predominate over residues 9–21 (IIEHHDDEEMEKR). Residues 50–72 (HRLLAYSDALISIIATVMILPVA) form a helical membrane-spanning segment. A RxxxFSD motif 1 motif is present at residues 51–57 (RLLAYSD). Residues 73–93 (HTKIQEDEELKQSIQALLTTK) lie on the Lumenal side of the membrane. A short helix H1-1 region spans residues 74–79 (TKIQED). Positions 81-87 (ELKQSIQ) are short helix H2-1. Residues 94 to 116 (IAVYLMTFLIVTVAWAAHIRLFQ) form a helical membrane-spanning segment. At 117–122 (VIERID) the chain is on the cytoplasmic side. Residues 123–144 (DTLALLNLACMMLITFLPYTFS) traverse the membrane as a helical segment. Topologically, residues 145 to 154 (LMATFPNNIL) are lumenal. Residues 155–176 (GILLFCACVMVIGLIQALIVLY) form a helical membrane-spanning segment. Residues 177–200 (GFSHPFLLNDQIQMSENQAYYKQH) are Cytoplasmic-facing. The next 2 helical transmembrane spans lie at 201–221 (ILKV…FSFI) and 222–242 (FFQL…ISQC). Residues 243–274 (LKWIRSKAIGGQTDESPDSMPFYTYHPSEPLS) lie on the Cytoplasmic side of the membrane. The helical transmembrane segment at 275–299 (KERVEAFSDGVFAIVATLLILDICE) threads the bilayer. Residues 277–283 (RVEAFSD) carry the RxxxFSD motif 2 motif. The Lumenal segment spans residues 300-326 (GNVPDPSVVKKKFDNSLIAALQEYGPE). The short helix H1-2 stretch occupies residues 305–313 (PSVVKKKFD). The segment at 315-321 (SLIAALQ) is short helix H2-2. A helical transmembrane segment spans residues 327–349 (YLAYFGSFVTVGLLWFVHHSLFL). At 350–355 (HVTKAT) the chain is on the cytoplasmic side. Residues 356 to 377 (RLMGLFNTFSLAFVGGLPLAYQ) form a helical membrane-spanning segment. The Lumenal portion of the chain corresponds to 378–392 (LTHESPRGSRNELEA). The helical transmembrane segment at 393-413 (VQISCVIIFFASLFQLAIWVT) threads the bilayer. Topologically, residues 414-433 (ALFTERETLHPYVRYGGREH) are cytoplasmic. Residues 434-457 (TFMLAKLSLYPCVALGTFFITCIL) form a helical membrane-spanning segment. The Lumenal portion of the chain corresponds to 458-459 (SR). The chain crosses the membrane as a helical span at residues 460–486 (FSAPIFHMMEICIPFAFLLLRLLVRVA). Topologically, residues 487-520 (LALLRWLFCSARNDLERIPVEEEESRLPINDIVT) are cytoplasmic.

The protein belongs to the TMEM175 family. As to quaternary structure, homodimer.

Its subcellular location is the endosome membrane. The protein resides in the lysosome membrane. It carries out the reaction H(+)(in) = H(+)(out). It catalyses the reaction K(+)(in) = K(+)(out). With respect to regulation, active at low pH (under pH 4.6): proton channel activity is activated by luminal side protons. Polyunsaturated fatty acids, such as arachidonic acid, also activate the channel activity. Proton-activated proton channel that catalyzes proton efflux from endosomes and lysosomes to maintain a steady-state pH. Activated at low pH (under pH 4.6) by luminal side protons: selectively mediates lysosomal proton release from lysosomes, eliciting a proton leak that balances V-ATPase activity to maintain pH homeostasis. Regulation of lumenal pH stability is required for autophagosome-lysosome fusion. Also acts as a potassium channel at higher pH, regulating potassium conductance in endosomes and lysosomes. This is Endosomal/lysosomal proton channel TMEM175 from Danio rerio (Zebrafish).